The primary structure comprises 531 residues: Non-muscle caldesmon (531 aa).

Residues 20–200 (AYQRNDDDEE…LKGGNLGENQ (181 aa)) form a myosin and calmodulin-binding region. A disordered region spans residues 21–379 (YQRNDDDEEE…KKPFKCFTPK (359 aa)). Over residues 41 to 50 (QERLRQKQEE) the composition is skewed to basic and acidic residues. Residues 54-68 (GQVTDQVEAHVQNSA) are compositionally biased toward polar residues. Over residues 93–116 (RLARREERRQKRLQEALERQKEFD) the composition is skewed to basic and acidic residues. The segment covering 120-133 (TDGSLSVPSRRMQN) has biased composition (polar residues). Ser-123 carries the phosphoserine modification. The span at 143–156 (GEEKGESRSGRYEM) shows a compositional bias: basic and acidic residues. Over residues 162-172 (VITSYQKNSYQ) the composition is skewed to polar residues. Over residues 200–227 (QIKDEKIKKDKEPKEEVKNFLDRKKGFT) the composition is skewed to basic and acidic residues. The residue at position 249 (Ser-249) is a Phosphoserine; by CDK1. Composition is skewed to basic and acidic residues over residues 271-297 (AGKR…KQKQ) and 305-372 (EELK…DKKP). A tropomyosin-binding region spans residues 303-360 (ELEELKKKREERRKVLEEEEQRRKQEEADRKAREEEEKRRLKEEIERRRAEAAEKRQK). Ser-382 is subject to Phosphoserine. A Glycyl lysine isopeptide (Lys-Gly) (interchain with G-Cter in SUMO2) cross-link involves residue Lys-384. The tract at residues 392–424 (LNKSVQKSGVKSTHQAAVVSKIDSRLEQYTNAI) is strong actin-binding. Ser-395 carries the post-translational modification Phosphoserine. The segment at 402-412 (KSTHQAAVVSK) is tropomyosin-binding. Residues 454–460 (WEKGSVF) are calmodulin-binding. The disordered stretch occupies residues 458–531 (SVFSSPSASG…VDKVTSPTKV (74 aa)). Residues 459 to 471 (VFSSPSASGTPNK) show a composition bias toward polar residues. The residue at position 462 (Ser-462) is a Phosphoserine; by CDK1. Thr-468 carries the phosphothreonine; by CDK1 modification. Ser-491 and Ser-497 each carry phosphoserine; by CDK1. Positions 503-522 (SDLRPGDVSGKRNLWEKQSV) are enriched in basic and acidic residues. Residues 506-531 (RPGDVSGKRNLWEKQSVDKVTSPTKV) are weak actin-binding. A Phosphoserine; by CDK1 modification is found at Ser-527.

The protein belongs to the caldesmon family. In non-muscle cells, phosphorylation by CDK1 during mitosis causes caldesmon to dissociate from microfilaments. Phosphorylation reduces caldesmon binding to actin, myosin, and calmodulin as well as its inhibition of actomyosin ATPase activity. Phosphorylation also occurs in both quiescent and dividing smooth muscle cells with similar effects on the interaction with actin and calmodulin and on microfilaments reorganization. CDK1-mediated phosphorylation promotes Schwann cell migration during peripheral nerve regeneration. High-molecular-weight caldesmon (h-caldesmon) is predominantly expressed in smooth muscles, whereas low-molecular-weight caldesmon (l-caldesmon) is widely distributed in non-muscle tissues and cells. Not expressed in skeletal muscle or heart.

It is found in the cytoplasm. The protein localises to the cytoskeleton. The protein resides in the myofibril. Its subcellular location is the stress fiber. Actin- and myosin-binding protein implicated in the regulation of actomyosin interactions in smooth muscle and nonmuscle cells (could act as a bridge between myosin and actin filaments). Stimulates actin binding of tropomyosin which increases the stabilization of actin filament structure. In muscle tissues, inhibits the actomyosin ATPase by binding to F-actin. This inhibition is attenuated by calcium-calmodulin and is potentiated by tropomyosin. Interacts with actin, myosin, two molecules of tropomyosin and with calmodulin. Also plays an essential role during cellular mitosis and receptor capping. Involved in Schwann cell migration during peripheral nerve regeneration. This is Non-muscle caldesmon (Cald1) from Rattus norvegicus (Rat).